A 273-amino-acid chain; its full sequence is Putative pyruvate, phosphate dikinase regulatory protein (273 aa).

149–156 is a binding site for ADP; that stretch reads GPSRTSKT.

It belongs to the pyruvate, phosphate/water dikinase regulatory protein family. PDRP subfamily.

It carries out the reaction N(tele)-phospho-L-histidyl/L-threonyl-[pyruvate, phosphate dikinase] + ADP = N(tele)-phospho-L-histidyl/O-phospho-L-threonyl-[pyruvate, phosphate dikinase] + AMP + H(+). The enzyme catalyses N(tele)-phospho-L-histidyl/O-phospho-L-threonyl-[pyruvate, phosphate dikinase] + phosphate + H(+) = N(tele)-phospho-L-histidyl/L-threonyl-[pyruvate, phosphate dikinase] + diphosphate. Functionally, bifunctional serine/threonine kinase and phosphorylase involved in the regulation of the pyruvate, phosphate dikinase (PPDK) by catalyzing its phosphorylation/dephosphorylation. In Rickettsia felis (strain ATCC VR-1525 / URRWXCal2) (Rickettsia azadi), this protein is Putative pyruvate, phosphate dikinase regulatory protein.